The following is a 669-amino-acid chain: PDF receptor (669 aa).

Topologically, residues 1 to 244 are extracellular; the sequence is MTLLSNILDC…DIARRTRTLE (244 aa). Positions 24-52 are disordered; that stretch reads RQSGSSGPSPSAPTAGTFESKSMLEPTSS. Residues 26–40 are compositionally biased toward low complexity; the sequence is SGSSGPSPSAPTAGT. Asparagine 111, asparagine 117, asparagine 130, asparagine 137, asparagine 148, and asparagine 198 each carry an N-linked (GlcNAc...) asparagine glycan. Residues 245–265 traverse the membrane as a helical segment; sequence IVGLCLSLFALIVSLLIFCTF. Residues 266 to 274 are Cytoplasmic-facing; sequence RSLRNNRTK. A helical membrane pass occupies residues 275–295; the sequence is IHKNLFVAMVLQVIIRLTLYL. Residues 296-334 are Extracellular-facing; that stretch reads DQFRRGNKEAATNTSLSVIENTPYLCEASYVLLEYARTA. An N-linked (GlcNAc...) asparagine glycan is attached at asparagine 308. Residues 335 to 355 form a helical membrane-spanning segment; that stretch reads MFMWMFIEGLYLHNMVTVAVF. Over 356–366 the chain is Cytoplasmic; it reads QGSFPLKFFSR. Residues 367–387 form a helical membrane-spanning segment; the sequence is LGWCVPILMTTVWARCTVMYM. At 388–411 the chain is on the extracellular side; sequence DTSLGECLWNYNLTPYYWILEGPR. Residues 412–432 form a helical membrane-spanning segment; that stretch reads LAVILLNFCFLVNIIRVLVMK. At 433–449 the chain is on the cytoplasmic side; that stretch reads LRQSQASDIEQTRKAVR. Residues 450 to 470 traverse the membrane as a helical segment; the sequence is AAIVLLPLLGITNLLHQLAPL. Residues 471–480 lie on the Extracellular side of the membrane; sequence KTATNFAVWS. A helical membrane pass occupies residues 481–501; sequence YGTHFLTSFQGFFIALIYCFL. Residues 502-669 are Cytoplasmic-facing; the sequence is NGEVRAVLLK…ESVVFELSEQ (168 aa). 2 disordered regions span residues 536 to 573 and 590 to 614; these read AYNT…KPSS and PRLQ…AEPD. A compositionally biased stretch (basic and acidic residues) spans 595 to 609; sequence KAREKGKDRVEKTDA.

It belongs to the G-protein coupled receptor 2 family. As to expression, mainly present in clock neurons of the brain. Localizes in all 4 s-LNv neurons, 1 LNd neuron, 7 DN1 neurons, and 1 DN3 neuron. In addition to the clock neurons, it is also present in approximately 13 pairs of neurons along the ventral nerve cord in third instar larvae, which do not overlap with dopaminergic or serotonergic neurons. Not present in DN2 neurons (at protein level).

It is found in the cell membrane. Functionally, receptor for PDF, a neuropeptide controlling circadian behavioral rhythms. Probably regulates circadian behavioral rhythms through coordination of activities of clock neurons. PDF-binding results in the elevation of cAMP synthesis. Plays a role in sleep regulation and regulates the state transition from sleep to wake. This chain is PDF receptor, found in Drosophila melanogaster (Fruit fly).